Reading from the N-terminus, the 476-residue chain is Protein transport protein Sec61 subunit alpha isoform 1 (476 aa).

The Cytoplasmic segment spans residues M1–L33. Residues W34 to I53 form a helical membrane-spanning segment. The Lumenal segment spans residues M54–L76. A helical transmembrane segment spans residues M77 to G96. Topologically, residues A97–K117 are cytoplasmic. The helical transmembrane segment at L118–G138 threads the bilayer. The Lumenal portion of the chain corresponds to D139–G144. The helical transmembrane segment at A145–L165 threads the bilayer. Residues D166–G172 lie on the Cytoplasmic side of the membrane. Residues Y173–W193 form a helical membrane-spanning segment. Over K194–P240 the chain is Lumenal. The helical transmembrane segment at N241–F261 threads the bilayer. Residues R262–N288 are Cytoplasmic-facing. Residues I289 to S309 form a helical membrane-spanning segment. Topologically, residues A310–V354 are lumenal. A helical transmembrane segment spans residues L355–F375. The Cytoplasmic portion of the chain corresponds to S376–A420. The chain crosses the membrane as a helical span at residues A421–I441. Over G442–T445 the chain is Lumenal. A helical transmembrane segment spans residues G446–V462. The Cytoplasmic segment spans residues K463–F476.

The protein belongs to the SecY/SEC61-alpha family. The SEC61 channel-forming translocon complex consists of channel-forming core components SEC61A1, SEC61B and SEC61G and different auxiliary components such as SEC62 and SEC63. The SEC61 channel associates with the multi-pass translocon (MPT) complex.

It is found in the endoplasmic reticulum membrane. Functionally, component of SEC61 channel-forming translocon complex that mediates transport of signal peptide-containing precursor polypeptides across the endoplasmic reticulum (ER). Forms a ribosome receptor and a gated pore in the ER membrane, both functions required for cotranslational translocation of nascent polypeptides. May cooperate with auxiliary protein SEC62, SEC63 and HSPA5/BiP to enable post-translational transport of small presecretory proteins. The SEC61 channel is also involved in ER membrane insertion of transmembrane proteins: it mediates membrane insertion of the first few transmembrane segments of proteins, while insertion of subsequent transmembrane regions of multi-pass membrane proteins is mediated by the multi-pass translocon (MPT) complex. The SEC61 channel cooperates with the translocating protein TRAM1 to import nascent proteins into the ER. Controls the passive efflux of calcium ions from the ER lumen to the cytosol through SEC61 channel, contributing to the maintenance of cellular calcium homeostasis. Plays a critical role in nephrogenesis, specifically at pronephros stage. The chain is Protein transport protein Sec61 subunit alpha isoform 1 (SEC61A1) from Bos taurus (Bovine).